Reading from the N-terminus, the 1358-residue chain is Phosphoinositide 3-kinase regulatory subunit 4 (1358 aa).

G2 is lipidated: N-myristoyl glycine. One can recognise a Protein kinase domain in the interval 26–324 (FEYDKSLGST…AFPEIFYTFL (299 aa)). Residues 32–40 (LGSTRFFKV) and K53 contribute to the ATP site. The active-site Proton acceptor is the D148. HEAT repeat units lie at residues 413 to 450 (ILLDRITPYLLHFSNDSVPRVRAEALRTLTKVLALVQE), 458 to 495 (IYPEYILPGIAHLAQDDATIVRLAYAENIALLAETALR), 572 to 610 (KANDVLLSHMITFLNDKNDWHLRGAFFDSIVGVAAYVGW), and 612 to 648 (SSSILKPLLQQGLSDAEEFVIVKALNALTCMCQLGLL). S808, S813, S853, and S865 each carry phosphoserine. WD repeat units follow at residues 991 to 1030 (EHKSAVNRIRVSDEHLLFATCSNDGTVKIWNSQKMEGKTT), 1040 to 1079 (RIGGRVKTLTFCQGSHYLAIASDNGAVQLLGIEASKLPKS), 1093 to 1134 (KEDG…NAWT), 1139 to 1178 (LKSGLITSFAVDIHQCWLCIGTSSGAMACWDMRFQLPISS), 1182 to 1223 (PSRA…RRLT), and 1237 to 1278 (PSPH…RSYV). A disordered region spans residues 1307-1326 (KQKVGPSDDTPRRGPESLPV). Residues 1315-1326 (DTPRRGPESLPV) are compositionally biased toward basic and acidic residues. At T1316 the chain carries Phosphothreonine. A WD 7 repeat occupies 1327-1358 (GHHDIITDIATFQTTQGFIVTASRDGIVKVWK).

Belongs to the protein kinase superfamily. Ser/Thr protein kinase family. Component of the PI3K (PI3KC3/PI3K-III/class III phosphatidylinositol 3-kinase) complex the core of which is composed of the catalytic subunit PIK3C3, the regulatory subunit PIK3R4 and BECN1 associating with additional regulatory/auxiliary subunits to form alternative complex forms. Alternative complex forms containing a fourth regulatory subunit in a mutually exclusive manner are PI3K complex I (PI3KC3-C1) containing ATG14, and PI3K complex II (PI3KC3-C2) containing UVRAG. PI3KC3-C1 displays a V-shaped architecture with PIK3R4 serving as a bridge between PIK3C3 and the ATG14:BECN1 subcomplex. Both, PI3KC3-C1 and PI3KC3-C2, can associate with further regulatory subunits, such as RUBCN, SH3GLB1/Bif-1, AMBRA1 and NRBF2. PI3KC3-C1 probably associates with PIK3CB. Interacts with RAB7A in the presence of PIK3C3/VPS34. Interacts with NRBF2. Interacts with ARMC3. Requires Mn(2+) as cofactor. Myristoylated. In terms of processing, probably autophosphorylated.

It is found in the late endosome. The protein resides in the cytoplasmic vesicle. Its subcellular location is the autophagosome. It localises to the membrane. It catalyses the reaction L-seryl-[protein] + ATP = O-phospho-L-seryl-[protein] + ADP + H(+). The catalysed reaction is L-threonyl-[protein] + ATP = O-phospho-L-threonyl-[protein] + ADP + H(+). In terms of biological role, regulatory subunit of the PI3K complex that mediates formation of phosphatidylinositol 3-phosphate; different complex forms are believed to play a role in multiple membrane trafficking pathways: PI3KC3-C1 is involved in initiation of autophagosomes and PI3KC3-C2 in maturation of autophagosomes and endocytosis. Involved in regulation of degradative endocytic trafficking and cytokinesis, probably in the context of PI3KC3-C2. In Mus musculus (Mouse), this protein is Phosphoinositide 3-kinase regulatory subunit 4 (Pik3r4).